We begin with the raw amino-acid sequence, 209 residues long: Putative amino acid efflux protein YcgF (209 aa).

The next 6 helical transmembrane spans lie at 1–21 (MNIF…VGPV), 39–59 (IFGL…YFGL), 62–82 (FLTA…VLTY), 110–130 (FASG…WLGI), 147–167 (LLIY…CMAI), and 184–204 (LTGI…YQGI).

The protein belongs to the Rht family.

The protein resides in the cell membrane. The protein is Putative amino acid efflux protein YcgF (ycgF) of Bacillus subtilis (strain 168).